A 620-amino-acid polypeptide reads, in one-letter code: Chaperone protein DnaK (620 aa).

The tract at residues 579–620 (KAQKEASAGAEASEDASGPSSTGSASDDDVVDADYEVVDEDK) is disordered. Positions 583–603 (EASAGAEASEDASGPSSTGSA) are enriched in low complexity. The segment covering 604–620 (SDDDVVDADYEVVDEDK) has biased composition (acidic residues).

The protein belongs to the heat shock protein 70 family.

Functionally, acts as a chaperone. The chain is Chaperone protein DnaK from Methanococcoides burtonii (strain DSM 6242 / NBRC 107633 / OCM 468 / ACE-M).